The following is a 415-amino-acid chain: MLQCIFLISDSGEVMLEKQLTGHRVDRSICAWFWDQYISQGDSFKALPVIASPTHYLFQIVRDGITFLACSQVEMPPLMAIEFLCRVADVLSEYLGGLNEDLIKDNFIIVYELLDEMIDNGFPLTTEPSILKEMIAPPNLVSKMLSVVTGNASNVSDTLPSGAGSCVPWRPTDPKYSSNEVYVDLVEEMDAIVNRDGELVKCEIYGEVQMNSQLTGFPDLTLSFANPSILEDMRFHPCVRYRPWESHQVLSFVPPDGEFKLMSYRVKKLKNTPVYVKPQITSDSGTCRISVLVGIRSDPGKTIESITLSFQLPHCVSSADLSSNHGTVTILSNKTCTWTIGRIPKDKTPCLSGTLALEPGLERLHVFPTFKLGFKIMGIALSGLRIEKLDLQTIPPRLYKGFRAQTRAGEFDVRL.

The 237-residue stretch at 178 to 414 (SNEVYVDLVE…QTRAGEFDVR (237 aa)) folds into the MHD domain.

It belongs to the adaptor complexes medium subunit family. Adaptor protein complex 3 (AP-3) is a heterotetramer composed of two large adaptins (delta-type subunit and beta-type subunit), a medium adaptin (mu-type subunit) and a small adaptin (sigma-type subunit).

It localises to the cytoplasm. It is found in the golgi apparatus. The protein localises to the cytoplasmic vesicle membrane. Its function is as follows. Part of the AP-3 complex, an adaptor-related complex which seems to be clathrin-associated. The complex is associated with the Golgi region as well as more peripheral structures. It facilitates the budding of vesicles from the Golgi membrane and may be directly involved in trafficking to the vacuole. It also functions in maintaining the identity of lytic vacuoles and in regulating the transition between storage and lytic vacuoles. The polypeptide is AP-3 complex subunit mu (AP3M) (Arabidopsis thaliana (Mouse-ear cress)).